Reading from the N-terminus, the 287-residue chain is Deoxyuridine 5'-triphosphate nucleotidohydrolase (287 aa).

173-175 (RSG) contacts substrate. The segment covering 264–275 (SSSKDTSDSQMS) has biased composition (low complexity). Residues 264-287 (SSSKDTSDSQMSRGDAGLGSSGLM) form a disordered region.

Belongs to the dUTPase family. Mg(2+) serves as cofactor.

It carries out the reaction dUTP + H2O = dUMP + diphosphate + H(+). Involved in nucleotide metabolism: produces dUMP, the immediate precursor of thymidine nucleotides and decreases the intracellular concentration of dUTP to avoid uracil incorporation into viral DNA. This Saimiriine herpesvirus 2 (strain 11) (SaHV-2) protein is Deoxyuridine 5'-triphosphate nucleotidohydrolase.